The chain runs to 378 residues: Cysteine synthase (378 aa).

Residues N10–E31 are disordered. The segment covering S15 to N28 has biased composition (low complexity). K79 is modified (N6-(pyridoxal phosphate)lysine). Pyridoxal 5'-phosphate is bound by residues G215 to T219 and S319.

Belongs to the cysteine synthase/cystathionine beta-synthase family. Pyridoxal 5'-phosphate serves as cofactor.

The enzyme catalyses O-acetyl-L-serine + hydrogen sulfide = L-cysteine + acetate. Its pathway is amino-acid biosynthesis; L-cysteine biosynthesis; L-cysteine from L-serine: step 2/2. In Dictyostelium discoideum (Social amoeba), this protein is Cysteine synthase (cysK).